Here is a 201-residue protein sequence, read N- to C-terminus: Lipopolysaccharide core heptose(II)-phosphate phosphatase (201 aa).

The signal sequence occupies residues 1–35; the sequence is MLAFTLRFIKNKRYLATLAGALVIIAGLTSQHAWS.

It belongs to the phosphoglycerate mutase family. Ais subfamily.

The protein localises to the periplasm. The protein operates within bacterial outer membrane biogenesis; lipopolysaccharide metabolism. Functionally, catalyzes the dephosphorylation of heptose(II) of the outer membrane lipopolysaccharide core. In Salmonella newport (strain SL254), this protein is Lipopolysaccharide core heptose(II)-phosphate phosphatase.